The following is a 571-amino-acid chain: Proline--tRNA ligase (571 aa).

It belongs to the class-II aminoacyl-tRNA synthetase family. ProS type 1 subfamily. Homodimer.

The protein localises to the cytoplasm. The enzyme catalyses tRNA(Pro) + L-proline + ATP = L-prolyl-tRNA(Pro) + AMP + diphosphate. Functionally, catalyzes the attachment of proline to tRNA(Pro) in a two-step reaction: proline is first activated by ATP to form Pro-AMP and then transferred to the acceptor end of tRNA(Pro). As ProRS can inadvertently accommodate and process non-cognate amino acids such as alanine and cysteine, to avoid such errors it has two additional distinct editing activities against alanine. One activity is designated as 'pretransfer' editing and involves the tRNA(Pro)-independent hydrolysis of activated Ala-AMP. The other activity is designated 'posttransfer' editing and involves deacylation of mischarged Ala-tRNA(Pro). The misacylated Cys-tRNA(Pro) is not edited by ProRS. The chain is Proline--tRNA ligase from Pseudomonas aeruginosa (strain UCBPP-PA14).